We begin with the raw amino-acid sequence, 1405 residues long: DNA-directed RNA polymerase subunit beta' (1405 aa).

Zn(2+) is bound by residues Cys-70, Cys-72, Cys-85, and Cys-88. Mg(2+) is bound by residues Asp-460, Asp-462, and Asp-464. Zn(2+) contacts are provided by Cys-814, Cys-888, Cys-895, and Cys-898.

Belongs to the RNA polymerase beta' chain family. The RNAP catalytic core consists of 2 alpha, 1 beta, 1 beta' and 1 omega subunit. When a sigma factor is associated with the core the holoenzyme is formed, which can initiate transcription. Mg(2+) serves as cofactor. Requires Zn(2+) as cofactor.

It catalyses the reaction RNA(n) + a ribonucleoside 5'-triphosphate = RNA(n+1) + diphosphate. Functionally, DNA-dependent RNA polymerase catalyzes the transcription of DNA into RNA using the four ribonucleoside triphosphates as substrates. The chain is DNA-directed RNA polymerase subunit beta' from Wigglesworthia glossinidia brevipalpis.